Consider the following 141-residue polypeptide: Large ribosomal subunit protein uL11 (141 aa).

It belongs to the universal ribosomal protein uL11 family. In terms of assembly, part of the ribosomal stalk of the 50S ribosomal subunit. Interacts with L10 and the large rRNA to form the base of the stalk. L10 forms an elongated spine to which L12 dimers bind in a sequential fashion forming a multimeric L10(L12)X complex. One or more lysine residues are methylated.

Forms part of the ribosomal stalk which helps the ribosome interact with GTP-bound translation factors. The polypeptide is Large ribosomal subunit protein uL11 (Opitutus terrae (strain DSM 11246 / JCM 15787 / PB90-1)).